We begin with the raw amino-acid sequence, 235 residues long: Small ribosomal subunit protein uS3 (235 aa).

The KH type-2 domain occupies 39–107 (VRKFLNKELA…PAQINIAEVK (69 aa)).

This sequence belongs to the universal ribosomal protein uS3 family. Part of the 30S ribosomal subunit. Forms a tight complex with proteins S10 and S14.

Its function is as follows. Binds the lower part of the 30S subunit head. Binds mRNA in the 70S ribosome, positioning it for translation. The chain is Small ribosomal subunit protein uS3 from Actinobacillus pleuropneumoniae serotype 5b (strain L20).